Reading from the N-terminus, the 1610-residue chain is Protein TASOR (1610 aa).

Positions 1–96 (MATAAETEAP…PERPFRRSFQ (96 aa)) are disordered. An N-acetylalanine modification is found at Ala2. The segment covering 41–51 (NGGGDGGGGAG) has biased composition (gly residues). The segment covering 52-61 (PEETAAAEAA) has biased composition (low complexity). Ser339 carries the post-translational modification Phosphoserine. Lys581 is covalently cross-linked (Glycyl lysine isopeptide (Lys-Gly) (interchain with G-Cter in SUMO2)). 3 positions are modified to phosphoserine: Ser628, Ser631, and Ser668. Disordered stretches follow at residues 631–671 (SDYE…SLDY) and 687–710 (KKNV…RKLE). Composition is skewed to basic and acidic residues over residues 652-671 (NSRD…SLDY) and 697-710 (EDTK…RKLE). At Ser793 the chain carries Phosphoserine. Glycyl lysine isopeptide (Lys-Gly) (interchain with G-Cter in SUMO2) cross-links involve residues Lys816 and Lys825. Ser836 is subject to Phosphoserine. Lys866 is covalently cross-linked (Glycyl lysine isopeptide (Lys-Gly) (interchain with G-Cter in SUMO2)). The segment at 915-941 (TGGNAGSPEDQHGKHGEKQTPDTLKGT) is disordered. Phosphoserine is present on residues Ser921 and Lys928. Residues 923-934 (EDQHGKHGEKQT) show a composition bias toward basic and acidic residues. Thr1004 bears the Phosphothreonine mark. Phosphoserine is present on residues Ser1059 and Ser1508.

It belongs to the TASOR family. As to quaternary structure, component of the HUSH complex; at least composed of TASOR, PPHLN1 and MPHOSPH8. Interacts with MORC2; the interaction associateS MORC2 with the HUSH complex which recruits MORC2 to heterochromatic loci. Interacts with ZNF638; leading to recruitment of the HUSH complex to unintegrated retroviral DNA. Interacts with INPP5A, EML1, SV1L, GPSM2, ITGB3BP, CNTN1, ETFA, PSMD8, S100A10, MPHOSPH8, TMEM100, ALB, PARPBP, HCFC2, NCBP1 and SETDB1. In terms of tissue distribution, present in skin, brain and testis (at protein level). Ubiquitously expressed at low levels in the majority of the organs, expressed at higher levels in kidneys, spleen, thymus, seminal vesicles, uterus, and ovaries and its expression is almost six times higher in male tissues than in females. Highly expressed in seminiferous tubules with a strong signal in Sertoli cells, spermatogonia, and spermatocytes.

Its subcellular location is the nucleus. It localises to the chromosome. Functionally, component of the HUSH complex, a multiprotein complex that mediates epigenetic repression. The HUSH complex is recruited to genomic loci rich in H3K9me3 and is required to maintain transcriptional silencing by promoting recruitment of SETDB1, a histone methyltransferase that mediates further deposition of H3K9me3, as well as MORC2. Also represses L1 retrotransposons in collaboration with MORC2 and, probably, SETDB1, the silencing is dependent of repressive epigenetic modifications, such as H3K9me3 mark. Silencing events often occur within introns of transcriptionally active genes, and lead to the down-regulation of host gene expression. The HUSH complex is also involved in the silencing of unintegrated retroviral DNA by being recruited by ZNF638: some part of the retroviral DNA formed immediately after infection remains unintegrated in the host genome and is transcriptionally repressed. Plays a crucial role in early embryonic development. Involved in the organization of spindle poles and spindle apparatus assembly during zygotic division. Plays an important role in maintaining epiblast fitness or potency. This chain is Protein TASOR, found in Mus musculus (Mouse).